The sequence spans 68 residues: Wasabi receptor toxin (68 aa).

Positions 1–21 (MKYFTLALTLLFLLLINPCKD) are cleaved as a signal peptide. Positions 22–35 (MNFAWAESSEKVER) are excised as a propeptide. 2 disulfides stabilise this stretch: cysteine 44-cysteine 62 and cysteine 48-cysteine 58.

It belongs to the short scorpion toxin superfamily. Potassium channel inhibitor kappa-KTx family. Kappa-KTx 1 subfamily. As to quaternary structure, monomer. Expressed by the venom gland.

It localises to the secreted. It is found in the host cytoplasm. Functionally, cell-penetrating peptide (CPP) with defensive purpose that induces pain by specifically activating mammalian sensory neuron TRPA1 channels. It non-covalently binds to the same region than other TRPA1 agonists (irritants), but acts via a distinct biochemical mechanism. Its binding stabilizes the TRPA1 open state and diminishes calcium-permeability. Consequently, it produces pain and pain hypersensitivity, but fails to trigger efferent release of neuropeptides (CGRP) and neurogenic inflammation typically produced by noxious electrophiles. Is not active on voltage-gated potassium channels and other TRP channels. The chain is Wasabi receptor toxin from Urodacus manicatus (Black rock scorpion).